The following is a 618-amino-acid chain: 1-deoxy-D-xylulose-5-phosphate synthase (618 aa).

Residues H73 and 114 to 116 contribute to the thiamine diphosphate site; that span reads GHS. D145 provides a ligand contact to Mg(2+). Thiamine diphosphate-binding positions include 146–147, N174, Y284, and E364; that span reads GA. N174 contacts Mg(2+).

It belongs to the transketolase family. DXPS subfamily. As to quaternary structure, homodimer. Mg(2+) is required as a cofactor. The cofactor is thiamine diphosphate.

The enzyme catalyses D-glyceraldehyde 3-phosphate + pyruvate + H(+) = 1-deoxy-D-xylulose 5-phosphate + CO2. Its pathway is metabolic intermediate biosynthesis; 1-deoxy-D-xylulose 5-phosphate biosynthesis; 1-deoxy-D-xylulose 5-phosphate from D-glyceraldehyde 3-phosphate and pyruvate: step 1/1. Functionally, catalyzes the acyloin condensation reaction between C atoms 2 and 3 of pyruvate and glyceraldehyde 3-phosphate to yield 1-deoxy-D-xylulose-5-phosphate (DXP). The chain is 1-deoxy-D-xylulose-5-phosphate synthase from Clostridium beijerinckii (strain ATCC 51743 / NCIMB 8052) (Clostridium acetobutylicum).